A 143-amino-acid chain; its full sequence is Hemoglobin cathodic subunit alpha (143 aa).

Ser-2 carries the post-translational modification N-acetylserine. The region spanning 2–143 (SLTAKDKTLV…VSAALADKYR (142 aa)) is the Globin domain. Residue His-59 participates in O2 binding. His-89 contacts heme b.

Belongs to the globin family. As to quaternary structure, heterotetramer of two alpha chains and two beta chains. As to expression, red blood cells.

In terms of biological role, involved in oxygen transport from the gills to the various peripheral tissues. This chain is Hemoglobin cathodic subunit alpha, found in Conger conger (Conger eel).